The chain runs to 72 residues: Phosphonoacetate hydrolase (72 aa).

As to quaternary structure, monomer. Requires Unlike bacterial phosphonoacetate hydrolase, does not require zinc as a cofactor. as cofactor.

It carries out the reaction phosphonoacetate + H2O = acetate + phosphate + H(+). With respect to regulation, unaffected by EDTA or Ca(2+), Co(2+), Cu(2+), Mg(2+), Mn(2+), Ni(2+) and Zn(2+). This is Phosphonoacetate hydrolase from Penicillium oxalicum.